A 64-amino-acid chain; its full sequence is Beta-defensin 5 (64 aa).

Positions 1-22 (MRLHHLLLVLLFLVLSAGSGFT) are cleaved as a signal peptide. Gln-23 is subject to Pyrrolidone carboxylic acid. 3 disulfides stabilise this stretch: Cys-31–Cys-60, Cys-38–Cys-53, and Cys-43–Cys-61.

Belongs to the beta-defensin family. As to expression, neutrophilic granules. Alveolar macrophages.

The protein localises to the secreted. Its function is as follows. Has bactericidal activity. Active against E.coli ML35 but not against S.aureus 502A. The polypeptide is Beta-defensin 5 (DEFB5) (Bos taurus (Bovine)).